We begin with the raw amino-acid sequence, 89 residues long: Small ribosomal subunit protein uS15 (89 aa).

This sequence belongs to the universal ribosomal protein uS15 family. Part of the 30S ribosomal subunit. Forms a bridge to the 50S subunit in the 70S ribosome, contacting the 23S rRNA.

Functionally, one of the primary rRNA binding proteins, it binds directly to 16S rRNA where it helps nucleate assembly of the platform of the 30S subunit by binding and bridging several RNA helices of the 16S rRNA. Its function is as follows. Forms an intersubunit bridge (bridge B4) with the 23S rRNA of the 50S subunit in the ribosome. This Shewanella piezotolerans (strain WP3 / JCM 13877) protein is Small ribosomal subunit protein uS15.